A 55-amino-acid polypeptide reads, in one-letter code: Large ribosomal subunit protein bL33 (55 aa).

It belongs to the bacterial ribosomal protein bL33 family.

The polypeptide is Large ribosomal subunit protein bL33 (Wigglesworthia glossinidia brevipalpis).